We begin with the raw amino-acid sequence, 634 residues long: ATP-dependent clpX-like chaperone, mitochondrial (634 aa).

The N-terminal 56 residues, 1–56, are a transit peptide targeting the mitochondrion; sequence MSSCGACTCGAAAARLLTTSLTSAQRGISCGRIHVPVLGRLGTTLDAQALRRAPLR. The interval 69 to 102 is disordered; the sequence is DGANKDGSGDGNKKSVTEGSSKKSGSGNSGKGGN. Residues 70–84 show a composition bias toward basic and acidic residues; that stretch reads GANKDGSGDGNKKSV. Residues 85-94 show a composition bias toward low complexity; sequence TEGSSKKSGS. One can recognise a ClpX-type ZB domain in the interval 94–147; sequence SGNSGKGGNQLRCPKCGDLCTHVETFVSSTRFVKCEKCHHFFVVLSEADSKKSI. Zn(2+) contacts are provided by cysteine 106, cysteine 109, cysteine 128, and cysteine 131. 295–302 lines the ATP pocket; that stretch reads PTGSGKTL. Position 438 is an N6-acetyllysine (lysine 438). A compositionally biased stretch (basic and acidic residues) spans 599–611; sequence KEPGYIRAPSKES. The tract at residues 599–634 is disordered; sequence KEPGYIRAPSKESSEEEYDSGVEEDGWPRQADAANS. Over residues 612 to 623 the composition is skewed to acidic residues; that stretch reads SEEEYDSGVEED. Phosphoserine is present on serine 618.

Belongs to the ClpX chaperone family. As to quaternary structure, homohexamer that forms a ring structure; this hexamerization requires ATP binding. Component of the ClpXP complex formed by the assembly of two CLPP heptameric rings with two CLPX hexameric rings, giving rise to a symmetrical structure with two central CLPP rings flanked by a CLPX ring at either end of the complex. Interacts with TFAM. Detected in liver (at protein level).

Its subcellular location is the mitochondrion. It is found in the mitochondrion matrix. The protein localises to the mitochondrion nucleoid. The catalysed reaction is ATP + H2O = ADP + phosphate + H(+). Its function is as follows. ATP-dependent chaperone that functions as an unfoldase. As part of the ClpXP protease complex, it recognizes specific protein substrates, unfolds them using energy derived from ATP hydrolysis, and then translocates them to the proteolytic subunit (CLPP) of the ClpXP complex for degradation. Thanks to its chaperone activity, it also functions in the incorporation of the pyridoxal phosphate cofactor into 5-aminolevulinate synthase, thereby activating 5-aminolevulinate (ALA) synthesis, the first step in heme biosynthesis. This chaperone is also involved in the control of mtDNA nucleoid distribution, by regulating mitochondrial transcription factor A (TFAM) activity. In Mus musculus (Mouse), this protein is ATP-dependent clpX-like chaperone, mitochondrial.